We begin with the raw amino-acid sequence, 464 residues long: ATP synthase subunit beta (464 aa).

An ATP-binding site is contributed by 150-157 (GGAGVGKT).

Belongs to the ATPase alpha/beta chains family. F-type ATPases have 2 components, CF(1) - the catalytic core - and CF(0) - the membrane proton channel. CF(1) has five subunits: alpha(3), beta(3), gamma(1), delta(1), epsilon(1). CF(0) has three main subunits: a(1), b(2) and c(9-12). The alpha and beta chains form an alternating ring which encloses part of the gamma chain. CF(1) is attached to CF(0) by a central stalk formed by the gamma and epsilon chains, while a peripheral stalk is formed by the delta and b chains.

The protein resides in the cell membrane. It catalyses the reaction ATP + H2O + 4 H(+)(in) = ADP + phosphate + 5 H(+)(out). In terms of biological role, produces ATP from ADP in the presence of a proton gradient across the membrane. The catalytic sites are hosted primarily by the beta subunits. This Dehalococcoides mccartyi (strain ATCC BAA-2266 / KCTC 15142 / 195) (Dehalococcoides ethenogenes (strain 195)) protein is ATP synthase subunit beta.